A 244-amino-acid chain; its full sequence is NAD(P)H-quinone oxidoreductase subunit K (244 aa).

Residues Cys-51, Cys-52, Cys-116, and Cys-147 each coordinate [4Fe-4S] cluster.

Belongs to the complex I 20 kDa subunit family. NDH-1 can be composed of about 15 different subunits; different subcomplexes with different compositions have been identified which probably have different functions. [4Fe-4S] cluster is required as a cofactor.

Its subcellular location is the cellular thylakoid membrane. The catalysed reaction is a plastoquinone + NADH + (n+1) H(+)(in) = a plastoquinol + NAD(+) + n H(+)(out). The enzyme catalyses a plastoquinone + NADPH + (n+1) H(+)(in) = a plastoquinol + NADP(+) + n H(+)(out). In terms of biological role, NDH-1 shuttles electrons from an unknown electron donor, via FMN and iron-sulfur (Fe-S) centers, to quinones in the respiratory and/or the photosynthetic chain. The immediate electron acceptor for the enzyme in this species is believed to be plastoquinone. Couples the redox reaction to proton translocation, and thus conserves the redox energy in a proton gradient. Cyanobacterial NDH-1 also plays a role in inorganic carbon-concentration. The protein is NAD(P)H-quinone oxidoreductase subunit K of Synechococcus sp. (strain JA-2-3B'a(2-13)) (Cyanobacteria bacterium Yellowstone B-Prime).